We begin with the raw amino-acid sequence, 111 residues long: Large ribosomal subunit protein uL22 (111 aa).

This sequence belongs to the universal ribosomal protein uL22 family. Part of the 50S ribosomal subunit.

In terms of biological role, this protein binds specifically to 23S rRNA; its binding is stimulated by other ribosomal proteins, e.g. L4, L17, and L20. It is important during the early stages of 50S assembly. It makes multiple contacts with different domains of the 23S rRNA in the assembled 50S subunit and ribosome. Its function is as follows. The globular domain of the protein is located near the polypeptide exit tunnel on the outside of the subunit, while an extended beta-hairpin is found that lines the wall of the exit tunnel in the center of the 70S ribosome. The sequence is that of Large ribosomal subunit protein uL22 from Legionella pneumophila (strain Lens).